Reading from the N-terminus, the 376-residue chain is Lactosylceramide 1,3-N-acetyl-beta-D-glucosaminyltransferase (376 aa).

Over 1 to 13 (MRLFVSRRVKRWK) the chain is Cytoplasmic. Residues 14–34 (IFHFFVTCFILSFMVFWSPIN) traverse the membrane as a helical; Signal-anchor for type II membrane protein segment. Residues 35–376 (NYIMSHMKSY…NSYPCWAAFA (342 aa)) lie on the Lumenal side of the membrane. Asn-57 carries an N-linked (GlcNAc...) asparagine glycan.

The protein belongs to the glycosyltransferase 31 family. Highly expressed in adult spleen, placenta and cerebellar Purkinje cells where it colocalizes with HNK-1. Expressed at lower level in brain, lung, thymus and muscle.

It localises to the golgi apparatus membrane. The catalysed reaction is a beta-D-Gal-(1-&gt;4)-beta-D-Glc-(1&lt;-&gt;1)-Cer(d18:1(4E)) + UDP-N-acetyl-alpha-D-glucosamine = a beta-D-GlcNAc-(1-&gt;3)-beta-D-Gal-(1-&gt;4)-beta-D-Glc-(1&lt;-&gt;1)-Cer(d18:1(4E)) + UDP + H(+). It carries out the reaction a neolactoside nLc4Cer(d18:1(4E)) + UDP-N-acetyl-alpha-D-glucosamine = a neolactoside IV(3)-beta-GlcNAc-nLc4Cer(d18:1(4E)) + UDP + H(+). Its pathway is protein modification; protein glycosylation. Functionally, beta-1,3-N-acetylglucosaminyltransferase that plays a key role in the synthesis of lacto- or neolacto-series carbohydrate chains on glycolipids, notably by participating in biosynthesis of HNK-1 and Lewis X carbohydrate structures. Has strong activity toward lactosylceramide (LacCer) and neolactotetraosylceramide (nLc(4)Cer; paragloboside), resulting in the synthesis of Lc(3)Cer and neolactopentaosylceramide (nLc(5)Cer), respectively. Plays a central role in regulating neolacto-series glycolipid synthesis during embryonic development. The sequence is that of Lactosylceramide 1,3-N-acetyl-beta-D-glucosaminyltransferase from Mus musculus (Mouse).